Reading from the N-terminus, the 107-residue chain is Flagellar transcriptional regulator FlhD (107 aa).

This sequence belongs to the FlhD family. As to quaternary structure, homodimer; disulfide-linked. Forms a heterohexamer composed of two FlhC and four FlhD subunits. Each FlhC binds a FlhD dimer, forming a heterotrimer, and a hexamer assembles by dimerization of two heterotrimers.

The protein resides in the cytoplasm. Functionally, functions in complex with FlhC as a master transcriptional regulator that regulates transcription of several flagellar and non-flagellar operons by binding to their promoter region. Activates expression of class 2 flagellar genes, including fliA, which is a flagellum-specific sigma factor that turns on the class 3 genes. Also regulates genes whose products function in a variety of physiological pathways. This Bordetella bronchiseptica (strain ATCC BAA-588 / NCTC 13252 / RB50) (Alcaligenes bronchisepticus) protein is Flagellar transcriptional regulator FlhD.